A 357-amino-acid chain; its full sequence is Inositol-tetrakisphosphate 1-kinase 3 (357 aa).

Positions 56 and 98 each coordinate 1D-myo-inositol 1,3,4-trisphosphate. ATP-binding residues include Arg-133 and Lys-183. 1D-myo-inositol 1,3,4-trisphosphate-binding residues include His-190 and Lys-222. ATP contacts are provided by residues 211–222, Ser-237, and Ser-262; that span reads QEFVNHGGVLFK. The Mg(2+) site is built by Asp-302, Asp-317, and Asn-319. Asn-319 provides a ligand contact to 1D-myo-inositol 1,3,4-trisphosphate.

This sequence belongs to the ITPK1 family. In terms of assembly, monomer. Mg(2+) serves as cofactor.

The enzyme catalyses 1D-myo-inositol 3,4,5,6-tetrakisphosphate + ATP = 1D-myo-inositol 1,3,4,5,6-pentakisphosphate + ADP + H(+). It carries out the reaction 1D-myo-inositol 1,3,4-trisphosphate + ATP = 1D-myo-inositol 1,3,4,5-tetrakisphosphate + ADP + H(+). It catalyses the reaction 1D-myo-inositol 1,3,4-trisphosphate + ATP = 1D-myo-inositol 1,3,4,6-tetrakisphosphate + ADP + H(+). Kinase that can phosphorylate various inositol polyphosphate such as Ins(3,4,5,6)P4 or Ins(1,3,4)P3 and participates in phytic acid biosynthesis in developing seeds. Phytic acid is the primary storage form of phosphorus in cereal grains and other plant seeds. The polypeptide is Inositol-tetrakisphosphate 1-kinase 3 (ITPK3) (Oryza sativa subsp. indica (Rice)).